A 471-amino-acid polypeptide reads, in one-letter code: GTPase Der (471 aa).

EngA-type G domains follow at residues 3-166 and 177-350; these read PTLA…EPEA and IKLA…SSAT. GTP-binding positions include 9-16, 56-60, 118-121, 183-190, 230-234, and 295-298; these read GRPNVGKS, DTGGI, NKVD, DTAGV, and NKWD. In terms of domain architecture, KH-like spans 351 to 435; sequence EKLNTNFLTK…PIRFEFKSSE (85 aa). The disordered stretch occupies residues 432–471; sequence KSSENPFAGRKNAMSKKPEHPSRRANSGGKSINRRPRPKS.

Belongs to the TRAFAC class TrmE-Era-EngA-EngB-Septin-like GTPase superfamily. EngA (Der) GTPase family. In terms of assembly, associates with the 50S ribosomal subunit.

Functionally, GTPase that plays an essential role in the late steps of ribosome biogenesis. This Saccharophagus degradans (strain 2-40 / ATCC 43961 / DSM 17024) protein is GTPase Der.